A 113-amino-acid polypeptide reads, in one-letter code: Putative membrane protein insertion efficiency factor (113 aa).

The protein belongs to the UPF0161 family.

The protein resides in the cell inner membrane. Functionally, could be involved in insertion of integral membrane proteins into the membrane. This Campylobacter jejuni subsp. jejuni serotype O:23/36 (strain 81-176) protein is Putative membrane protein insertion efficiency factor.